The following is a 181-amino-acid chain: Lysozyme C (181 aa).

Positions 1-19 are cleaved as a signal peptide; sequence MRIAFFLLILSIIVGLAYG. The propeptide occupies 139-181; it reads LTDSRPLGPFNVTEEEMDQLFIDHEIAMAQCEAEKTCNGFDLE.

Belongs to the dictyostelium lysozyme family. Post-translationally, contains six disulfide bonds.

The protein resides in the cytoplasmic vesicle lumen. It carries out the reaction Hydrolysis of (1-&gt;4)-beta-linkages between N-acetylmuramic acid and N-acetyl-D-glucosamine residues in a peptidoglycan and between N-acetyl-D-glucosamine residues in chitodextrins.. Functionally, has antibacterial activity. This chain is Lysozyme C (alyC), found in Dictyostelium discoideum (Social amoeba).